The sequence spans 199 residues: Probable molybdenum cofactor guanylyltransferase (199 aa).

GTP contacts are provided by residues 6–8, K18, D65, and D97; that span reads LAG. D97 is a binding site for Mg(2+).

The protein belongs to the MobA family. Mg(2+) serves as cofactor.

The protein localises to the cytoplasm. It carries out the reaction Mo-molybdopterin + GTP + H(+) = Mo-molybdopterin guanine dinucleotide + diphosphate. Its function is as follows. Transfers a GMP moiety from GTP to Mo-molybdopterin (Mo-MPT) cofactor (Moco or molybdenum cofactor) to form Mo-molybdopterin guanine dinucleotide (Mo-MGD) cofactor. This Staphylococcus aureus (strain Mu50 / ATCC 700699) protein is Probable molybdenum cofactor guanylyltransferase.